A 501-amino-acid chain; its full sequence is ATP synthase subunit alpha (501 aa).

169–176 (GDRQTGKT) contributes to the ATP binding site.

This sequence belongs to the ATPase alpha/beta chains family. As to quaternary structure, F-type ATPases have 2 components, CF(1) - the catalytic core - and CF(0) - the membrane proton channel. CF(1) has five subunits: alpha(3), beta(3), gamma(1), delta(1), epsilon(1). CF(0) has three main subunits: a(1), b(2) and c(9-12). The alpha and beta chains form an alternating ring which encloses part of the gamma chain. CF(1) is attached to CF(0) by a central stalk formed by the gamma and epsilon chains, while a peripheral stalk is formed by the delta and b chains.

The protein resides in the cell membrane. It catalyses the reaction ATP + H2O + 4 H(+)(in) = ADP + phosphate + 5 H(+)(out). Its function is as follows. Produces ATP from ADP in the presence of a proton gradient across the membrane. The alpha chain is a regulatory subunit. The protein is ATP synthase subunit alpha of Streptococcus uberis (strain ATCC BAA-854 / 0140J).